The following is a 491-amino-acid chain: Probable glycine dehydrogenase (decarboxylating) subunit 2 (491 aa).

The residue at position 273 (Lys-273) is an N6-(pyridoxal phosphate)lysine.

Belongs to the GcvP family. C-terminal subunit subfamily. In terms of assembly, the glycine cleavage system is composed of four proteins: P, T, L and H. In this organism, the P 'protein' is a heterodimer of two subunits. It depends on pyridoxal 5'-phosphate as a cofactor.

It carries out the reaction N(6)-[(R)-lipoyl]-L-lysyl-[glycine-cleavage complex H protein] + glycine + H(+) = N(6)-[(R)-S(8)-aminomethyldihydrolipoyl]-L-lysyl-[glycine-cleavage complex H protein] + CO2. The glycine cleavage system catalyzes the degradation of glycine. The P protein binds the alpha-amino group of glycine through its pyridoxal phosphate cofactor; CO(2) is released and the remaining methylamine moiety is then transferred to the lipoamide cofactor of the H protein. In Bacillus cereus (strain G9842), this protein is Probable glycine dehydrogenase (decarboxylating) subunit 2.